The primary structure comprises 818 residues: Serine/threonine-protein phosphatase 4 regulatory subunit 3 (818 aa).

The WH1 domain maps to 1–100 (MTDTRRRVKV…DEIWEKICQV (100 aa)). The tract at residues 718-818 (LAKSSFSGRQ…PPSKKSRLSS (101 aa)) is disordered. Positions 721–730 (SSFSGRQNPS) are enriched in polar residues. Residues 736 to 756 (SGSTKTSLSSPPPSASLSPGS) show a composition bias toward low complexity. Residues 788–804 (YPDDDEEEEDDDDEESK) show a composition bias toward acidic residues.

The protein belongs to the SMEK family. Serine/threonine-protein phosphatase 4 (PP4) occurs in different assemblies of the catalytic and one or more regulatory subunits.

Its function is as follows. Regulatory subunit of serine/threonine-protein phosphatase 4. The sequence is that of Serine/threonine-protein phosphatase 4 regulatory subunit 3 (smek1) from Tetraodon nigroviridis (Spotted green pufferfish).